A 259-amino-acid polypeptide reads, in one-letter code: Acetylglutamate kinase (259 aa).

Residues 46-47 (GG), arginine 68, and asparagine 162 each bind substrate.

It belongs to the acetylglutamate kinase family. ArgB subfamily.

The protein localises to the cytoplasm. It catalyses the reaction N-acetyl-L-glutamate + ATP = N-acetyl-L-glutamyl 5-phosphate + ADP. It participates in amino-acid biosynthesis; L-arginine biosynthesis; N(2)-acetyl-L-ornithine from L-glutamate: step 2/4. Functionally, catalyzes the ATP-dependent phosphorylation of N-acetyl-L-glutamate. This is Acetylglutamate kinase from Roseiflexus castenholzii (strain DSM 13941 / HLO8).